The primary structure comprises 195 residues: uncharacterized protein (195 aa).

The HTH tetR-type domain maps to 10-70; it reads EETVARLLQA…ATAYEVLRRQ (61 aa). The segment at residues 33 to 52 is a DNA-binding region (H-T-H motif); sequence SAAVITKRAGVSVGALFRHF.

This is an uncharacterized protein from Mycobacterium tuberculosis (strain CDC 1551 / Oshkosh).